A 348-amino-acid chain; its full sequence is 3-isopropylmalate dehydrogenase (348 aa).

Residue 76–87 coordinates NAD(+); it reads GPKWTDPNNRPE. 4 residues coordinate substrate: R94, R104, R132, and D217. Mg(2+)-binding residues include D217, D241, and D245. An NAD(+)-binding site is contributed by 275-287; that stretch reads GSAPDIAGKNVAN.

It belongs to the isocitrate and isopropylmalate dehydrogenases family. LeuB type 1 subfamily. As to quaternary structure, homodimer. It depends on Mg(2+) as a cofactor. Mn(2+) is required as a cofactor.

Its subcellular location is the cytoplasm. It catalyses the reaction (2R,3S)-3-isopropylmalate + NAD(+) = 4-methyl-2-oxopentanoate + CO2 + NADH. The protein operates within amino-acid biosynthesis; L-leucine biosynthesis; L-leucine from 3-methyl-2-oxobutanoate: step 3/4. Catalyzes the oxidation of 3-carboxy-2-hydroxy-4-methylpentanoate (3-isopropylmalate) to 3-carboxy-4-methyl-2-oxopentanoate. The product decarboxylates to 4-methyl-2 oxopentanoate. This chain is 3-isopropylmalate dehydrogenase, found in Staphylococcus aureus (strain MW2).